The sequence spans 599 residues: Sulfite reductase [NADPH] flavoprotein alpha-component (599 aa).

Residues 64-202 (ITLISASQTG…VAAQWRARIV (139 aa)) form the Flavodoxin-like domain. FMN is bound by residues 70–75 (SQTGNA), 117–120 (STQG), and 153–162 (LGDTSYEFFC). The region spanning 234–448 (EAPLRASLSV…IEHNDNFRLP (215 aa)) is the FAD-binding FR-type domain. FAD contacts are provided by residues Thr322, Ala356, 386–389 (RLYS), 404–406 (TVG), Tyr410, and 419–422 (GGAS). NADP(+)-binding positions include 519–520 (SR), 525–529 (KIYVQ), and Asp561. Tyr599 contacts FAD.

Belongs to the NADPH-dependent sulphite reductase flavoprotein subunit CysJ family. It in the N-terminal section; belongs to the flavodoxin family. This sequence in the C-terminal section; belongs to the flavoprotein pyridine nucleotide cytochrome reductase family. Alpha(8)-beta(8). The alpha component is a flavoprotein, the beta component is a hemoprotein. Requires FAD as cofactor. FMN serves as cofactor.

It carries out the reaction hydrogen sulfide + 3 NADP(+) + 3 H2O = sulfite + 3 NADPH + 4 H(+). It functions in the pathway sulfur metabolism; hydrogen sulfide biosynthesis; hydrogen sulfide from sulfite (NADPH route): step 1/1. In terms of biological role, component of the sulfite reductase complex that catalyzes the 6-electron reduction of sulfite to sulfide. This is one of several activities required for the biosynthesis of L-cysteine from sulfate. The flavoprotein component catalyzes the electron flow from NADPH -&gt; FAD -&gt; FMN to the hemoprotein component. The polypeptide is Sulfite reductase [NADPH] flavoprotein alpha-component (Salmonella arizonae (strain ATCC BAA-731 / CDC346-86 / RSK2980)).